Reading from the N-terminus, the 89-residue chain is Small ribosomal subunit protein uS14 (89 aa).

It belongs to the universal ribosomal protein uS14 family. Part of the 30S ribosomal subunit. Contacts proteins S3 and S10.

Functionally, binds 16S rRNA, required for the assembly of 30S particles and may also be responsible for determining the conformation of the 16S rRNA at the A site. The polypeptide is Small ribosomal subunit protein uS14 (Azobacteroides pseudotrichonymphae genomovar. CFP2).